The sequence spans 132 residues: Agouti-signaling protein (132 aa).

A signal peptide spans 1 to 22 (MDVTRLLLATLLVFLCFFTVYS). The N-linked (GlcNAc...) asparagine glycan is linked to Asn-39. Positions 61–87 (HISRKEAEKKRSSKKEASMKKVARPRT) are disordered. A compositionally biased stretch (basic and acidic residues) spans 64–79 (RKEAEKKRSSKKEASM). 5 cysteine pairs are disulfide-bonded: Cys-93-Cys-108, Cys-100-Cys-114, Cys-107-Cys-125, Cys-111-Cys-132, and Cys-116-Cys-123. In terms of domain architecture, Agouti spans 93–132 (CVATRDSCKPPAPACCDPCASCQCRFFRSACSCRVLSLNC).

It localises to the secreted. Involved in the regulation of melanogenesis. The binding of ASP to MC1R precludes alpha-MSH initiated signaling and thus blocks production of cAMP, leading to a down-regulation of eumelanogenesis (brown/black pigment) and thus increasing synthesis of pheomelanin (yellow/red pigment). The chain is Agouti-signaling protein (ASIP) from Colobus polykomos (Western black-and-white colobus monkey).